We begin with the raw amino-acid sequence, 249 residues long: 2-dehydro-3-deoxy-L-rhamnonate dehydrogenase (NAD(+)) (249 aa).

The active-site Proton acceptor is Y156.

Belongs to the short-chain dehydrogenases/reductases (SDR) family. As to quaternary structure, homotetramer.

It carries out the reaction 2-dehydro-3-deoxy-L-rhamnonate + NAD(+) = 2,4-didehydro-3-deoxy-L-rhamnonate + NADH + H(+). Its pathway is carbohydrate degradation; L-rhamnose degradation. Its function is as follows. Catalyzes the NAD(+)-dependent dehydrogenation of 2-dehydro-3-deoxy-L-rhamnonate to form 2,4-didehydro-3-deoxy-L-rhamnonate. Does not show any detectable activity in the presence of NADP(+). Catalyzes the fourth step in an alternative pathway for rhamnose utilization that does not involve phosphorylated intermediates. This chain is 2-dehydro-3-deoxy-L-rhamnonate dehydrogenase (NAD(+)), found in Sphingomonas sp. (strain SKA58).